Here is a 241-residue protein sequence, read N- to C-terminus: MFSNIDHKAVAALLHGQGCANILKTVLDNCKVSSVSTEPLINTILDSFSLALSSVNSPNRQPHHESSSRDMAGLVPQRSSKKKICGVKGLEIYRDDSPNPRLDDGFTWRKYGQKTIKTSLYQRCYYRCAYAKDQNCYATKRVQMIQDSPPVYRTTYLGQHTCKAFGVHDNTYGSEMINFDQVVSESVMRQLATIGEQAVLMEDEANHIMNQEYDINDYLVDDEVFWGNEFPLFSSEDLMLF.

The interval 56-79 (NSPNRQPHHESSSRDMAGLVPQRS) is disordered. The segment at residues 97–165 (SPNPRLDDGF…YLGQHTCKAF (69 aa)) is a DNA-binding region (WRKY).

Belongs to the WRKY group III family.

It localises to the nucleus. In terms of biological role, transcription factor. Interacts specifically with the W box (5'-(T)TGAC[CT]-3'), a frequently occurring elicitor-responsive cis-acting element. The protein is Probable WRKY transcription factor 63 (WRKY63) of Arabidopsis thaliana (Mouse-ear cress).